The primary structure comprises 244 residues: Cysteine-rich secretory protein 2 (244 aa).

An N-terminal signal peptide occupies residues 1–21; sequence MALLPVVVFLITMLLPCVLTN. An SCP domain is found at 43 to 170; that stretch reads NKHNQLRKSV…SLKYYYVCQY (128 aa). 5 disulfide bridges follow: C190/C197, C193/C202, C206/C239, C215/C233, and C224/C237. Residues 206–239 enclose the ShKT domain; that stretch reads CEYEDLLSNCESLKNTAGCEHQLLVEKCKATCRC.

This sequence belongs to the CRISP family. Interacts with NSUN4 isoform 3. Testis.

It is found in the secreted. May regulate some ion channels' activity and thereby regulate calcium fluxes during sperm capacitation. This chain is Cysteine-rich secretory protein 2 (CRISP2), found in Cavia porcellus (Guinea pig).